A 161-amino-acid polypeptide reads, in one-letter code: Nucleotide-binding protein Glov_3198 (161 aa).

This sequence belongs to the YajQ family.

Its function is as follows. Nucleotide-binding protein. This Trichlorobacter lovleyi (strain ATCC BAA-1151 / DSM 17278 / SZ) (Geobacter lovleyi) protein is Nucleotide-binding protein Glov_3198.